The sequence spans 278 residues: uncharacterized protein (278 aa).

Residues 1 to 34 (MAKTIKVIRKKDPKKKNLSDPLAKQKLVWKIGHV) are Cytoplasmic-facing. The helical transmembrane segment at 35–55 (LTLVFGLLFSITYFYHVLIFF) threads the bilayer. Over 56-129 (KYRSWKWLFL…DLLSSENFHT (74 aa)) the chain is Extracellular. A helical membrane pass occupies residues 130 to 150 (LLIACLWFFGGGKSFYKILPY). Residues 151–180 (MILSYLHLTKMNYELNANKEEKIPLTPKDR) are Cytoplasmic-facing. The helical transmembrane segment at 181-201 (KMLHLLAYSELLVILALTLDT) threads the bilayer. At 202 to 205 (ILFK) the chain is on the extracellular side. A helical membrane pass occupies residues 206–222 (TGTSGFMLVIYVGIYWL). Over 223–278 (RLNFSPYAQVAVLELLVKFEKYVPKKYRDKWQVIKNFIYMKMKEHEKRTEEVARYA) the chain is Cytoplasmic.

Its subcellular location is the cell membrane. This is an uncharacterized protein from Saccharomyces cerevisiae (strain ATCC 204508 / S288c) (Baker's yeast).